The chain runs to 468 residues: Peroxisome proliferator-activated receptor alpha (468 aa).

Positions 99–173 form a DNA-binding region, nuclear receptor; it reads NIECRICGDK…VGMSHNAIRF (75 aa). 2 NR C4-type zinc fingers span residues 102–122 and 139–161; these read CRICGDKASGYHYGVHACEGC and CDRSCKIQKKNRNKCQYCRFHKC. Residues 239-466 form the NR LBD domain; it reads FVIHDMETLC…HPLLQEIYRD (228 aa). Residues 304-433 form a required for heterodimerization with RXRA region; sequence DQVTLLKYGV…PKLLQKMVDL (130 aa).

Belongs to the nuclear hormone receptor family. NR1 subfamily. As to quaternary structure, heterodimer; with RXRA. This heterodimerization is required for DNA binding and transactivation activity. Interacts with NCOA3 coactivator. Interacts with CITED2; the interaction stimulates its transcriptional activity. Also interacts with PPARBP in vitro. Interacts with AKAP13, LPIN1, PRDM16 and coactivator NCOA6. Interacts with ASXL1 and ASXL2. Interacts with PER2. Interacts with SIRT1; the interaction seems to be modulated by NAD(+) levels. Interacts with CRY1 and CRY2. In hepatocytes, interacts with PAQR3 and HUWE1; the interactions promote PPARA poylubiquitination and HUWE1-mediated degradation. Ubiquitinated by E3 ubiquitin-protein ligase HUWE1; leading to proteasomal degradation. In terms of processing, phosphorylated. Highly expressed in liver, kidney and heart. Very weakly expressed in brain and testis.

Its subcellular location is the nucleus. Its function is as follows. Ligand-activated transcription factor. Key regulator of lipid metabolism. Activated by the endogenous ligand 1-palmitoyl-2-oleoyl-sn-glycerol-3-phosphocholine (16:0/18:1-GPC). Activated by oleylethanolamide, a naturally occurring lipid that regulates satiety. Receptor for peroxisome proliferators such as hypolipidemic drugs and fatty acids. Regulates the peroxisomal beta-oxidation pathway of fatty acids. Functions as a transcription activator for the ACOX1 and P450 genes. Transactivation activity requires heterodimerization with RXRA and is antagonized by NR2C2. May be required for the propagation of clock information to metabolic pathways regulated by PER2. The sequence is that of Peroxisome proliferator-activated receptor alpha (Ppara) from Mus musculus (Mouse).